A 465-amino-acid polypeptide reads, in one-letter code: Methionine aminopeptidase 2-2 (465 aa).

Residues Met1–Pro13 are compositionally biased toward basic and acidic residues. Residues Met1–Gln92 form a disordered region. The segment covering Gly44 to Asp55 has biased composition (acidic residues). The segment covering Thr71–Thr86 has biased composition (basic residues). His217 contributes to the substrate binding site. Positions 238, 249, and 318 each coordinate a divalent metal cation. His326 is a substrate binding site. A divalent metal cation-binding residues include Glu351 and Glu446.

The protein belongs to the peptidase M24A family. Methionine aminopeptidase eukaryotic type 2 subfamily. Co(2+) is required as a cofactor. The cofactor is Zn(2+). Mn(2+) serves as cofactor. Requires Fe(2+) as cofactor.

The protein resides in the cytoplasm. It carries out the reaction Release of N-terminal amino acids, preferentially methionine, from peptides and arylamides.. Cotranslationally removes the N-terminal methionine from nascent proteins. The N-terminal methionine is often cleaved when the second residue in the primary sequence is small and uncharged (Met-Ala-, Cys, Gly, Pro, Ser, Thr, or Val). The protein is Methionine aminopeptidase 2-2 of Blastomyces gilchristii (strain SLH14081) (Blastomyces dermatitidis).